The sequence spans 221 residues: Penicillin-binding protein activator LpoB (221 aa).

A signal peptide spans 1 to 20; it reads MLNRMYRYALLATVALALSG. Cysteine 21 is lipidated: N-palmitoyl cysteine. Residue cysteine 21 is the site of S-diacylglycerol cysteine attachment. The segment at 29–82 is disordered; it reads PAPVEEAQPGTQQPTQPVPPPTQPVPTVPSVPSIPAQPGPIEHQPENATPEPKA. Pro residues predominate over residues 44–57; it reads QPVPPPTQPVPTVP.

The protein belongs to the LpoB family. As to quaternary structure, interacts with PBP1b.

The protein localises to the cell outer membrane. In terms of biological role, regulator of peptidoglycan synthesis that is essential for the function of penicillin-binding protein 1B (PBP1b). In Cronobacter turicensis (strain DSM 18703 / CCUG 55852 / LMG 23827 / z3032), this protein is Penicillin-binding protein activator LpoB.